The chain runs to 497 residues: G protein-coupled receptor gprM (497 aa).

The N-linked (GlcNAc...) asparagine glycan is linked to N3. Transmembrane regions (helical) follow at residues 66-86 (ISVAILPLCIFLLVSYAVLPV), 98-118 (FTLGICFMEASKIAFIIPLGV), 138-158 (CAFTGSLLLLGGWMVVVWSFL), 179-199 (WGALIFGWVVPAVGLTVMLIL), and 221-241 (YWIPIISFAVAALILQLATMA). N259 carries N-linked (GlcNAc...) asparagine glycosylation. Helical transmembrane passes span 293–313 (VTLVLIIIANVIFFSVTFIEL) and 357–377 (LLLAVLVLLSLVGFWNFILFA). N421 carries an N-linked (GlcNAc...) asparagine glycan. The disordered stretch occupies residues 428–497 (YKSPSPMVRS…APAVYREYDD (70 aa)).

Belongs to the G-protein coupled receptor GPR1/git3 family. As to quaternary structure, interacts with gpaA.

Its subcellular location is the cell membrane. Its function is as follows. G protein-coupled receptor that plays a role in conidiation and regulation of the biosynthesis of secondary metabolites such as dihydroxynaphthalene (DHN)-melanin, via interaction with the G-protein complex alpha subunit gpaA. The sequence is that of G protein-coupled receptor gprM from Aspergillus fumigatus (strain CBS 144.89 / FGSC A1163 / CEA10) (Neosartorya fumigata).